A 333-amino-acid polypeptide reads, in one-letter code: MATHTFSCIDGHTCGNPVRLVSGGGPRLEGANMLEKRAHFLKEFDWIRTGLMFEPRGHDMMSGSILYPPTRPDCDVAVLFIETSGCLPMCGHGTIGTITMGIENGLITPREPGKLSIDAPAGKVDITYRQEGRFVEEVRLTNVPSFLYAEGLAAEVEGLGEIVVDVAYGGNFYAIVEPQKNFRDMADHTAGELVGWSPKLRAALNAKYEFVHPEHPEIRGLSHIQWTGKPTQPEAHARNAVFYGEKAIDRSPCGTGTSARIAQLAAKGKLKVGDEFVHESIIGSLFKGRVEAAAKVADRDAIIPSIAGWARMTGINTIFIDDRDPFAHGFVVR.

The active-site Proton acceptor is the C90. Substrate is bound by residues 91–92 (GH), H223, and D249. The active-site Proton donor is C253. 254-255 (GT) provides a ligand contact to substrate.

This sequence belongs to the proline racemase family.

It carries out the reaction trans-4-hydroxy-L-proline = cis-4-hydroxy-D-proline. Likely catalyzes the epimerization of trans-4-hydroxy-L-proline (t4LHyp) to cis-4-hydroxy-D-proline (c4DHyp). May be involved in the degradation pathway that converts t4LHyp to alpha-ketoglutarate, which would allow R.meliloti to grow on t4LHyp as a sole carbon source. In Rhizobium meliloti (strain 1021) (Ensifer meliloti), this protein is Probable 4-hydroxyproline 2-epimerase.